Here is a 66-residue protein sequence, read N- to C-terminus: UPF0457 protein BA_2525/GBAA_2525/BAS2348 (66 aa).

Belongs to the UPF0457 family.

The sequence is that of UPF0457 protein BA_2525/GBAA_2525/BAS2348 from Bacillus anthracis.